A 274-amino-acid polypeptide reads, in one-letter code: S-methyl-5'-thioadenosine phosphorylase (274 aa).

Phosphate contacts are provided by residues Ser-20, 62 to 63 (RH), and 95 to 96 (SA). Residue Met-194 participates in substrate binding. Position 195 (Thr-195) interacts with phosphate. 218 to 220 (DYD) is a binding site for substrate.

The protein belongs to the PNP/MTAP phosphorylase family. MTAP subfamily. Homohexamer. Dimer of a homotrimer.

The enzyme catalyses S-methyl-5'-thioadenosine + phosphate = 5-(methylsulfanyl)-alpha-D-ribose 1-phosphate + adenine. It functions in the pathway amino-acid biosynthesis; L-methionine biosynthesis via salvage pathway; S-methyl-5-thio-alpha-D-ribose 1-phosphate from S-methyl-5'-thioadenosine (phosphorylase route): step 1/1. In terms of biological role, catalyzes the reversible phosphorylation of S-methyl-5'-thioadenosine (MTA) to adenine and 5-methylthioribose-1-phosphate. Involved in the breakdown of MTA, a major by-product of polyamine biosynthesis. Responsible for the first step in the methionine salvage pathway after MTA has been generated from S-adenosylmethionine. Has broad substrate specificity with 6-aminopurine nucleosides as preferred substrates. This chain is S-methyl-5'-thioadenosine phosphorylase, found in Hyperthermus butylicus (strain DSM 5456 / JCM 9403 / PLM1-5).